The chain runs to 189 residues: Endoribonuclease YbeY (189 aa).

Zn(2+) contacts are provided by H146, H150, and H156.

This sequence belongs to the endoribonuclease YbeY family. Zn(2+) is required as a cofactor.

The protein localises to the cytoplasm. Functionally, single strand-specific metallo-endoribonuclease involved in late-stage 70S ribosome quality control and in maturation of the 3' terminus of the 16S rRNA. The chain is Endoribonuclease YbeY from Prochlorococcus marinus (strain MIT 9211).